The sequence spans 238 residues: MTDATDPGALSAALAAALYRLMTWLSPSFPVGAFAYSSGLEWAVEAGDIKDAATLTDWLSAMLSDGAGFCDGVVLAQAYRAASAGDDARLRAVADLACAMVPSRERHLETTTQGRAFVEIASHAWSSARLPPAIAACGGAMAYPVAVGIVSAAHEVPLAAVLHAFLHALVSNWISAAARLVPLGQTDSQRVLAALEPVVAPTAARALAASLDDLGSATFRADLASLRHESQYTRLFRS.

The protein belongs to the UreF family. UreD, UreF and UreG form a complex that acts as a GTP-hydrolysis-dependent molecular chaperone, activating the urease apoprotein by helping to assemble the nickel containing metallocenter of UreC. The UreE protein probably delivers the nickel.

It localises to the cytoplasm. In terms of biological role, required for maturation of urease via the functional incorporation of the urease nickel metallocenter. The sequence is that of Urease accessory protein UreF from Rhodopseudomonas palustris (strain BisA53).